An 86-amino-acid polypeptide reads, in one-letter code: uncharacterized protein (86 aa).

The next 2 membrane-spanning stretches (helical) occupy residues 20–38 (IQFWGFVAATGVLLYSVYL) and 47–63 (FSTFLFACVGTAATKGV). A disordered region spans residues 67 to 86 (LSQRREQGKEQGREQGREQE). Positions 69-86 (QRREQGKEQGREQGREQE) are enriched in basic and acidic residues.

It is found in the cell membrane. This is an uncharacterized protein from Haemophilus influenzae (strain ATCC 51907 / DSM 11121 / KW20 / Rd).